The chain runs to 254 residues: Glutathione S-transferase F14 (254 aa).

The GST N-terminal domain maps to 4–85 (SKMKLHCGFI…YLAEQYKDVG (82 aa)). Glutathione is bound by residues 42–43 (AK), 56–57 (EV), and 69–70 (EP). A GST C-terminal domain is found at 92-231 (DPKKRAIMSM…DLMKQRRLPI (140 aa)).

The protein belongs to the GST superfamily. Phi family.

The protein resides in the cytoplasm. Its subcellular location is the cytosol. It carries out the reaction RX + glutathione = an S-substituted glutathione + a halide anion + H(+). Functionally, may be involved in the conjugation of reduced glutathione to a wide number of exogenous and endogenous hydrophobic electrophiles and have a detoxification role against certain herbicides. In Arabidopsis thaliana (Mouse-ear cress), this protein is Glutathione S-transferase F14.